The following is a 467-amino-acid chain: uncharacterized protein (467 aa).

Residues 1 to 60 (MVRVSRGCQSCVDAKLQSTPSPSPSKSPSPTESPEQCLQKRQSGEQVVLPSRPFPRTSPR) are disordered.

In terms of biological role, involved in osmoadaptation. This is an uncharacterized protein from Emericella nidulans (strain FGSC A4 / ATCC 38163 / CBS 112.46 / NRRL 194 / M139) (Aspergillus nidulans).